Here is a 390-residue protein sequence, read N- to C-terminus: Magnesium-protoporphyrin IX monomethyl ester [oxidative] cyclase (390 aa).

It belongs to the AcsF family. Fe cation serves as cofactor.

It catalyses the reaction Mg-protoporphyrin IX 13-monomethyl ester + 3 NADPH + 3 O2 + 2 H(+) = 3,8-divinyl protochlorophyllide a + 3 NADP(+) + 5 H2O. The protein operates within porphyrin-containing compound metabolism; chlorophyll biosynthesis (light-independent). Its function is as follows. Catalyzes the formation of the isocyclic ring in chlorophyll biosynthesis. Mediates the cyclase reaction, which results in the formation of divinylprotochlorophyllide (Pchlide) characteristic of all chlorophylls from magnesium-protoporphyrin IX 13-monomethyl ester (MgPMME). The sequence is that of Magnesium-protoporphyrin IX monomethyl ester [oxidative] cyclase from Prochlorococcus marinus (strain MIT 9312).